We begin with the raw amino-acid sequence, 234 residues long: uncharacterized protein (234 aa).

A helical transmembrane segment spans residues 13 to 32 (KSINYYIFFFQYTLVYNTIQ). Disordered stretches follow at residues 102 to 130 (HSKT…SSNS) and 159 to 185 (ESDS…SEYE). Positions 103–130 (SKTTSLPFSSSSPQSSSSSSSSSSSSNS) are enriched in low complexity. Acidic residues predominate over residues 167–185 (EFDSESNSDFDSESESEYE).

The protein resides in the membrane. This is an uncharacterized protein from Dictyostelium discoideum (Social amoeba).